The chain runs to 212 residues: uncharacterized protein (212 aa).

A helical membrane pass occupies residues 5–25; it reads IFIILIAVLLIGVNIKKIAAA.

The protein resides in the membrane. This is an uncharacterized protein from Borreliella burgdorferi (strain ATCC 35210 / DSM 4680 / CIP 102532 / B31) (Borrelia burgdorferi).